The following is a 337-amino-acid chain: Anthranilate phosphoribosyltransferase (337 aa).

5-phospho-alpha-D-ribose 1-diphosphate-binding positions include Gly-81, 84–85 (GD), Ser-89, 91–94 (NVST), 109–117 (KHGNRALSS), and Ala-121. Residue Gly-81 coordinates anthranilate. Ser-93 contacts Mg(2+). An anthranilate-binding site is contributed by Asn-112. Arg-167 contacts anthranilate. Mg(2+) contacts are provided by Asp-226 and Glu-227.

This sequence belongs to the anthranilate phosphoribosyltransferase family. As to quaternary structure, homodimer. The cofactor is Mg(2+).

It carries out the reaction N-(5-phospho-beta-D-ribosyl)anthranilate + diphosphate = 5-phospho-alpha-D-ribose 1-diphosphate + anthranilate. It participates in amino-acid biosynthesis; L-tryptophan biosynthesis; L-tryptophan from chorismate: step 2/5. Its function is as follows. Catalyzes the transfer of the phosphoribosyl group of 5-phosphorylribose-1-pyrophosphate (PRPP) to anthranilate to yield N-(5'-phosphoribosyl)-anthranilate (PRA). The polypeptide is Anthranilate phosphoribosyltransferase (Bradyrhizobium diazoefficiens (strain JCM 10833 / BCRC 13528 / IAM 13628 / NBRC 14792 / USDA 110)).